We begin with the raw amino-acid sequence, 167 residues long: Methyl-coenzyme M reductase II operon protein D (167 aa).

As to quaternary structure, MCR is composed of three subunits: alpha, beta, and gamma. The function of protein D is not known.

The sequence is that of Methyl-coenzyme M reductase II operon protein D (mrtD) from Methanocaldococcus jannaschii (strain ATCC 43067 / DSM 2661 / JAL-1 / JCM 10045 / NBRC 100440) (Methanococcus jannaschii).